The chain runs to 342 residues: NADH-quinone oxidoreductase subunit H 1 (342 aa).

8 consecutive transmembrane segments (helical) span residues 7 to 27 (FLLE…VIAM), 78 to 98 (ALFI…GAVI), 120 to 140 (IGVL…MIGG), 166 to 186 (MGLS…GEIV), 193 to 213 (WWNI…SFAE), 245 to 265 (LFAE…FYFG), 284 to 304 (ILGT…FMWV), and 322 to 342 (KIMI…ILLF).

This sequence belongs to the complex I subunit 1 family. NDH-1 is composed of 14 different subunits. Subunits NuoA, H, J, K, L, M, N constitute the membrane sector of the complex.

Its subcellular location is the cell inner membrane. It carries out the reaction a quinone + NADH + 5 H(+)(in) = a quinol + NAD(+) + 4 H(+)(out). In terms of biological role, NDH-1 shuttles electrons from NADH, via FMN and iron-sulfur (Fe-S) centers, to quinones in the respiratory chain. The immediate electron acceptor for the enzyme in this species is believed to be ubiquinone. Couples the redox reaction to proton translocation (for every two electrons transferred, four hydrogen ions are translocated across the cytoplasmic membrane), and thus conserves the redox energy in a proton gradient. This subunit may bind ubiquinone. The protein is NADH-quinone oxidoreductase subunit H 1 of Cytophaga hutchinsonii (strain ATCC 33406 / DSM 1761 / CIP 103989 / NBRC 15051 / NCIMB 9469 / D465).